The sequence spans 593 residues: MGSGSSSYRPKAIYLDIDGRIQKVIFSKYCNSSDIMDLFCIATGLPRNTTISLLTTDDAMVSIDPTMPANSERTPYKVRPVAIKQLSAGVEDKRTTSRGQSAERPLRDRRVVGLEQPRREGAFESGQVEPRPREPQGCYQEGQRIPPEREELIQSVLAQVAEQFSRAFKINELKAEVANHLAVLEKRVELEGLKVVEIEKCKSDIKKMREELAARSSRTNCPCKYSFLDNHKKLTPRRDVPTYPKYLLSPETIEALRKPTFDVWLWEPNEMLSCLEHMYHDLGLVRDFSINPVTLRRWLFCVHDNYRNNPFHNFRHCFCVAQMMYSMVWLCSLQEKFSQTDILILMTAAICHDLDHPGYNNTYQINARTELAVRYNDISPLENHHCAVAFQILAEPECNIFSNIPPDGFKQIRQGMITLILATDMARHAEIMDSFKEKMENFDYSNEEHMTLLKMILIKCCDISNEVRPMEVAEPWVDCLLEEYFMQSDREKSEGLPVAPFMDRDKVTKATAQIGFIKFVLIPMFETVTKLFPMVEEIMLQPLWESRDRYEELKRIDDAMKELQKKTDSLTSGATEKSRERSRDVKNSEGDCA.

The tract at residues 87–141 (SAGVEDKRTTSRGQSAERPLRDRRVVGLEQPRREGAFESGQVEPRPREPQGCYQE) is disordered. Over residues 104-122 (RPLRDRRVVGLEQPRREGA) the composition is skewed to basic and acidic residues. The PDEase domain maps to 236–557 (PRRDVPTYPK…DRYEELKRID (322 aa)). His312 serves as the catalytic Proton donor. 312-316 (HNFRH) is a 3',5'-cyclic GMP binding site. His316, His352, and Asp353 together coordinate Zn(2+). Residue Asp353 participates in 3',5'-cyclic GMP binding. Asp353 lines the Mg(2+) pocket. Residue Ser379 is modified to Phosphoserine. 3',5'-cyclic GMP contacts are provided by residues Asp462, Tyr484, and 512–513 (AQ). Asp462 is a Zn(2+) binding site. The interval 564 to 593 (QKKTDSLTSGATEKSRERSRDVKNSEGDCA) is disordered. Residues 576–593 (EKSRERSRDVKNSEGDCA) are compositionally biased toward basic and acidic residues.

This sequence belongs to the cyclic nucleotide phosphodiesterase family. PDE9 subfamily. In terms of assembly, homodimer. The cofactor is Zn(2+). It depends on Mg(2+) as a cofactor. As to expression, expressed in all tissues examined (testis, brain, small intestine, skeletal muscle, heart, lung, thymus, spleen, placenta, kidney, liver, pancreas, ovary and prostate) except blood. Highest levels in brain, heart, kidney, spleen, prostate and colon. Isoform PDE9A12 is found in prostate. In brain, present in the cortex, cerebellum, and subiculum (at protein level). In heart, primarily localizes to myocytes.

The protein resides in the cell projection. It localises to the ruffle membrane. The protein localises to the cytoplasm. It is found in the perinuclear region. Its subcellular location is the golgi apparatus. The protein resides in the endoplasmic reticulum. It localises to the cell membrane. The protein localises to the sarcolemma. It carries out the reaction 3',5'-cyclic GMP + H2O = GMP + H(+). Its pathway is purine metabolism; 3',5'-cyclic GMP degradation; GMP from 3',5'-cyclic GMP: step 1/1. Inhibited by zaprinast; inhibitor is however not specific to PDE9A. Specifically inhibited by BAY-73-6691 (1-(2-chlorophenyl)-6-((2R)-3,3,3- trifluoro-2-methylpropyl)-1,5-dihydro-4H-pyrazolo(3,4-d)pyrimidine-4-one). BAY-73-9961 has two enantiomers, (R) and (S), due to the presence of a chiral center, and both forms vary in their pattern of interaction. Specifically inhibited by PF-4181366 (4H-Pyrazolo[3,4-d]pyrimidin-4-one, 1- cyclopentyl-1,5-dihydro-6-[(3S,4S)-4-methyl- 1-(6-quinoxalinylmethyl)-3-pyrrolidinyl]-one). Specifically inhibited by PF-4449613 ((R)-6-(1-(3-phenoxyazetidin-1-yl)ethyl)-1-(tetrahydro-2H-pyran-4-yl)-1H-pyrazolo[3,4-d]pyrimidin- 4(5H)-one). Specifically inhibited by inhibitor 28 (2-((1-(2-Chlorophenyl)-4-hydroxy-1Hpyrazolo[ 3,4-d]pyrimidin-6-yl)amino)-N-(4- methoxyphenyl)propanamide): inhibitor forms a hydrogen bond with Tyr-484 and Gln-513. Specifically inhibited by 1-Cyclopentyl-6-[(1r)-1-(3-phenoxyazetidin- 1-Yl)ethyl]-1,5-dihydro-4h-pyrazolo[3,4-D] pyrimidin-4-one: inhibitor forms a hydrogen bond with Tyr-484 and Gln-513. Specifically hydrolyzes the second messenger cGMP, which is a key regulator of many important physiological processes. Highly specific: compared to other members of the cyclic nucleotide phosphodiesterase family, has the highest affinity and selectivity for cGMP. Specifically regulates natriuretic-peptide-dependent cGMP signaling in heart, acting as a regulator of cardiac hypertrophy in myocytes and muscle. Does not regulate nitric oxide-dependent cGMP in heart. Additional experiments are required to confirm whether its ability to hydrolyze natriuretic-peptide-dependent cGMP is specific to heart or is a general feature of the protein. In brain, involved in cognitive function, such as learning and long-term memory. The polypeptide is High affinity cGMP-specific 3',5'-cyclic phosphodiesterase 9A (Homo sapiens (Human)).